A 481-amino-acid chain; its full sequence is MNILRRGRLGSNVKEDVMKFTTSLEFDKEIFESDILCDIAHTTMLVEQNVISEENGKKIIAELKKIAKRGMENLDLDPSLDDIHMVIESELIKELGEDVAGRMHTGRSRNDEVATDLRLSLRKKVLEIIGHLITMEKNMLTVSDAHKETLTVGYTHLQQAQPVTFGHQILSHVSAIERDISRFFDTYNRINISPLGCGAMATTGFNLNRKRTKDLLGFYGIIENSMDGVSSRDFIVETMANISMLGTNLSKICEELVVFSSAEFNTIEIANEYTSTSSIMPQKKNPDVAEITRAKLSTLNGELVTVLTIMKALPNTYNRDLQEISPHLWKSVYTLIDSIQMVDGMISTVKVNKERMKENAEKNYSTATELADTLVRECGIAFRMAHGIVGELVKRSIEEKVEIKEIISEVLEKNNLSLSQEKIDTALDPFENVKLRNVIGGPAPEEVERAISSFNEKISAHKDKLDEKISEIKTAEKNLLE.

This sequence belongs to the lyase 1 family. Argininosuccinate lyase subfamily.

It is found in the cytoplasm. The enzyme catalyses 2-(N(omega)-L-arginino)succinate = fumarate + L-arginine. It participates in amino-acid biosynthesis; L-arginine biosynthesis; L-arginine from L-ornithine and carbamoyl phosphate: step 3/3. This Methanococcus maripaludis (strain DSM 14266 / JCM 13030 / NBRC 101832 / S2 / LL) protein is Argininosuccinate lyase.